The sequence spans 270 residues: Urease accessory protein UreD (270 aa).

This sequence belongs to the UreD family. In terms of assembly, ureD, UreF and UreG form a complex that acts as a GTP-hydrolysis-dependent molecular chaperone, activating the urease apoprotein by helping to assemble the nickel containing metallocenter of UreC. The UreE protein probably delivers the nickel.

The protein localises to the cytoplasm. Required for maturation of urease via the functional incorporation of the urease nickel metallocenter. The chain is Urease accessory protein UreD from Microcystis aeruginosa (strain NIES-843 / IAM M-2473).